A 427-amino-acid polypeptide reads, in one-letter code: Dihydroorotase (427 aa).

The Zn(2+) site is built by H58 and H60. Residues 60 to 62 and N92 each bind substrate; that span reads HLR. Zn(2+) is bound by residues D150, H177, and H230. N276 is a substrate binding site. D303 is a Zn(2+) binding site. Residue D303 is part of the active site. Substrate is bound by residues H307 and 321 to 322; that span reads FG.

This sequence belongs to the metallo-dependent hydrolases superfamily. DHOase family. Class I DHOase subfamily. It depends on Zn(2+) as a cofactor.

It catalyses the reaction (S)-dihydroorotate + H2O = N-carbamoyl-L-aspartate + H(+). It functions in the pathway pyrimidine metabolism; UMP biosynthesis via de novo pathway; (S)-dihydroorotate from bicarbonate: step 3/3. Catalyzes the reversible cyclization of carbamoyl aspartate to dihydroorotate. This Macrococcus caseolyticus (strain JCSC5402) (Macrococcoides caseolyticum) protein is Dihydroorotase.